Reading from the N-terminus, the 303-residue chain is Acetaldehyde dehydrogenase 1 (303 aa).

Catalysis depends on Cys130, which acts as the Acyl-thioester intermediate. NAD(+)-binding positions include 161–169 and Asn272; that span reads SVGPGTRKN.

Belongs to the acetaldehyde dehydrogenase family.

The catalysed reaction is acetaldehyde + NAD(+) + CoA = acetyl-CoA + NADH + H(+). The polypeptide is Acetaldehyde dehydrogenase 1 (Methylibium petroleiphilum (strain ATCC BAA-1232 / LMG 22953 / PM1)).